Consider the following 238-residue polypeptide: 2-C-methyl-D-erythritol 4-phosphate cytidylyltransferase (238 aa).

Belongs to the IspD/TarI cytidylyltransferase family. IspD subfamily.

The catalysed reaction is 2-C-methyl-D-erythritol 4-phosphate + CTP + H(+) = 4-CDP-2-C-methyl-D-erythritol + diphosphate. Its pathway is isoprenoid biosynthesis; isopentenyl diphosphate biosynthesis via DXP pathway; isopentenyl diphosphate from 1-deoxy-D-xylulose 5-phosphate: step 2/6. In terms of biological role, catalyzes the formation of 4-diphosphocytidyl-2-C-methyl-D-erythritol from CTP and 2-C-methyl-D-erythritol 4-phosphate (MEP). This Pelotomaculum thermopropionicum (strain DSM 13744 / JCM 10971 / SI) protein is 2-C-methyl-D-erythritol 4-phosphate cytidylyltransferase.